The sequence spans 2023 residues: Protein Daple (2023 aa).

Residues 11–131 enclose the Calponin-homology (CH) domain; the sequence is NFMDSPLVVW…RMLLLILGCA (121 aa). Coiled coils occupy residues 250–415, 458–1064, and 1105–1419; these read RQHL…LLEE, NESA…VEKN, and LKQI…QYKF. The disordered stretch occupies residues 1013–1035; the sequence is RHEEEAAHSEISQQTLGQTRSLP. Over residues 1022–1033 the composition is skewed to polar residues; that stretch reads EISQQTLGQTRS. Disordered stretches follow at residues 1441–1824 and 1837–2023; these read KPKK…GSAS and LRSN…YGCV. A compositionally biased stretch (basic and acidic residues) spans 1442-1460; sequence PKKESSRERPDAPRERIRS. Pro residues predominate over residues 1478-1491; that stretch reads SAPPPPPPPLPPRQ. Composition is skewed to polar residues over residues 1497–1518 and 1564–1585; these read DSMNSQSVEENHVQSPTLSSPA and TCSTPLSRNSHNAPGFTSSSSL. Composition is skewed to low complexity over residues 1623-1643 and 1667-1704; these read SAEFSRNTSSSNSPVSSKGSL and RLSQSSLLPRSSTLPCDSPSASRPSQRPASRRPSSPGS. A GBA motif is present at residues 1700–1728; that stretch reads SSPGSEMVTLEEFLQESNALSPPTVQTGS. Polar residues-rich tracts occupy residues 1714–1727, 1752–1763, 1785–1799, and 1809–1824; these read QESNALSPPTVQTG, TPTNYVTPTVKT, LTDTSTPPSHSQTLP, and ALQQSSPRGSVGGSAS. A compositionally biased stretch (basic and acidic residues) spans 1890-1904; it reads VDPRRLSLAQPRDEF. Residues 1927 to 1945 are compositionally biased toward low complexity; the sequence is GSGSSRAGAARSGSAQPRG. The segment covering 1974-1988 has biased composition (basic and acidic residues); the sequence is QEQREAESPLLKKAD. Over residues 1989-2014 the composition is skewed to polar residues; the sequence is TTNLSYASKEQPTSKPASPDPNNDPQ. The short motif at 2020–2023 is the PDZ-binding element; the sequence is YGCV.

This sequence belongs to the CCDC88 family.

It localises to the cytoplasm. Its subcellular location is the cell junction. Its function is as follows. Positive regulator of Wnt signaling, acting synergistically with dvl2. Functions upstream of ctnnb1/beta-catenin in the canonical Wnt pathway, and also activates jnk in the Wnt/planar cell polarity (PCP) pathway. Acts as a non-receptor guanine nucleotide exchange factor which binds to and activates guanine nucleotide-binding protein G(i) alpha (Gi-alpha) subunits. This promotes apical cell constriction and subsequent bending of the neural plate during neurulation via arhgef18. The sequence is that of Protein Daple from Danio rerio (Zebrafish).